The chain runs to 479 residues: Trigger factor (479 aa).

One can recognise a PPIase FKBP-type domain in the interval 174–261; that stretch reads GDIAVVSFSG…LKELKTRELP (88 aa). The interval 438 to 479 is disordered; the sequence is VLESEAKTSKPAAKSKGSKTKSTKTKTNKANTEKPASDKSKS. Positions 453 to 464 are enriched in basic residues; that stretch reads KGSKTKSTKTKT. Over residues 468–479 the composition is skewed to basic and acidic residues; the sequence is NTEKPASDKSKS.

Belongs to the FKBP-type PPIase family. Tig subfamily.

The protein resides in the cytoplasm. The catalysed reaction is [protein]-peptidylproline (omega=180) = [protein]-peptidylproline (omega=0). Involved in protein export. Acts as a chaperone by maintaining the newly synthesized protein in an open conformation. Functions as a peptidyl-prolyl cis-trans isomerase. In Prochlorococcus marinus (strain MIT 9313), this protein is Trigger factor.